We begin with the raw amino-acid sequence, 198 residues long: MTNYPQLNKEIQDNEIKVAMHTNKGDMTFKLFPDIAPKTVENFVTHAKNGYYDGITFHRVINDFMIQGGDPTATGMGGESIYGGSFEDEFSLEAFNLYGALSMANAGPNTNGSQFFVVQMKEVPESMVNQLVDGGWPEPIAKAYADNGGTPWLDQKHTVFGQLIEGEATLEDIANTKVGAQDKPVHDVVIESIDVEDK.

The PPIase cyclophilin-type domain occupies 14–195 (NEIKVAMHTN…HDVVIESIDV (182 aa)).

Belongs to the cyclophilin-type PPIase family.

The enzyme catalyses [protein]-peptidylproline (omega=180) = [protein]-peptidylproline (omega=0). Its function is as follows. PPIases accelerate the folding of proteins. It catalyzes the cis-trans isomerization of proline imidic peptide bonds in oligopeptides. The chain is Putative peptidyl-prolyl cis-trans isomerase from Staphylococcus haemolyticus (strain JCSC1435).